The following is a 212-amino-acid chain: Ribosomal RNA small subunit methyltransferase G (212 aa).

Residues Gly80, Leu85, 131-132 (AE), and Arg146 each bind S-adenosyl-L-methionine.

This sequence belongs to the methyltransferase superfamily. RNA methyltransferase RsmG family.

It is found in the cytoplasm. It catalyses the reaction guanosine(527) in 16S rRNA + S-adenosyl-L-methionine = N(7)-methylguanosine(527) in 16S rRNA + S-adenosyl-L-homocysteine. In terms of biological role, specifically methylates the N7 position of guanine in position 527 of 16S rRNA. The polypeptide is Ribosomal RNA small subunit methyltransferase G (Stenotrophomonas maltophilia (strain K279a)).